The primary structure comprises 180 residues: NADH-quinone oxidoreductase subunit I (180 aa).

2 4Fe-4S ferredoxin-type domains span residues 44-74 and 90-119; these read LNRYPDGLEKCIGCELCAWACPADAIYVEGA and RVYQINYLRCIGCGLCIEACPTRALTMTTE. Positions 54, 57, 60, 64, 99, 102, 105, and 109 each coordinate [4Fe-4S] cluster. Positions 145 to 180 are disordered; sequence MQAPPHDMAPGKTDDDYYLGNVTPITPVPSGTEDAR.

It belongs to the complex I 23 kDa subunit family. NDH-1 is composed of 14 different subunits. Subunits NuoA, H, J, K, L, M, N constitute the membrane sector of the complex. [4Fe-4S] cluster serves as cofactor.

It localises to the cell membrane. The enzyme catalyses a quinone + NADH + 5 H(+)(in) = a quinol + NAD(+) + 4 H(+)(out). NDH-1 shuttles electrons from NADH, via FMN and iron-sulfur (Fe-S) centers, to quinones in the respiratory chain. The immediate electron acceptor for the enzyme in this species is believed to be menaquinone. Couples the redox reaction to proton translocation (for every two electrons transferred, four hydrogen ions are translocated across the cytoplasmic membrane), and thus conserves the redox energy in a proton gradient. The polypeptide is NADH-quinone oxidoreductase subunit I (Mycolicibacterium smegmatis (strain ATCC 700084 / mc(2)155) (Mycobacterium smegmatis)).